A 342-amino-acid polypeptide reads, in one-letter code: MSAFTPASEVLLRHSDDFEQSRILFAGDLQDDLPARFESAASRVHTQQFHHWQLLSQLMGEKARFSLVAHADDVADCDTLIYYWPKNKPEAQFQLMNILSLLPLGTDIFVVGENRSGVRSAEQMLADYAPLNKIDSARRCGLYHGRLEKQPVFDAEKYWGEYRINDLTIKTLPGVFSRDGLDVGSQLLLSTLTPHTKGKVLDVGCGAGVLSAALASHSPKVRLTLCDVSAPAVEASRATLAANGVEGEVFASNVFSDVKGRFDMIISNPPFHDGIQTSLDAAQTLIHGAVRHLNSGGELRIVANAFLPYPKVLDETFGFHEVIAQTGRFKVYRTVMTRQAKK.

It belongs to the methyltransferase superfamily. RsmC family. In terms of assembly, monomer.

The protein localises to the cytoplasm. The catalysed reaction is guanosine(1207) in 16S rRNA + S-adenosyl-L-methionine = N(2)-methylguanosine(1207) in 16S rRNA + S-adenosyl-L-homocysteine + H(+). In terms of biological role, specifically methylates the guanine in position 1207 of 16S rRNA in the 30S particle. This chain is Ribosomal RNA small subunit methyltransferase C, found in Citrobacter koseri (strain ATCC BAA-895 / CDC 4225-83 / SGSC4696).